Reading from the N-terminus, the 117-residue chain is UPF0102 protein Clos_1471 (117 aa).

Belongs to the UPF0102 family.

This chain is UPF0102 protein Clos_1471, found in Alkaliphilus oremlandii (strain OhILAs) (Clostridium oremlandii (strain OhILAs)).